A 1286-amino-acid polypeptide reads, in one-letter code: 5-oxoprolinase (1286 aa).

Phosphoserine is present on residues S930 and S1077.

Belongs to the oxoprolinase family. As to quaternary structure, homodimer.

The protein resides in the cytoplasm. The enzyme catalyses 5-oxo-L-proline + ATP + 2 H2O = L-glutamate + ADP + phosphate + H(+). Its function is as follows. Catalyzes the cleavage of 5-oxo-L-proline to form L-glutamate coupled to the hydrolysis of ATP to ADP and inorganic phosphate. This chain is 5-oxoprolinase (OXP1), found in Saccharomyces cerevisiae (strain ATCC 204508 / S288c) (Baker's yeast).